The following is a 209-amino-acid chain: Thymidine kinase (209 aa).

ATP-binding positions include 25–32 (GCMFAGKT) and 103–106 (DEVQ). Glu104 acts as the Proton acceptor in catalysis. Positions 160, 163, 198, and 201 each coordinate Zn(2+).

It belongs to the thymidine kinase family. Homotetramer.

It localises to the cytoplasm. It carries out the reaction thymidine + ATP = dTMP + ADP + H(+). This chain is Thymidine kinase, found in Mycoplasma mycoides subsp. mycoides SC (strain CCUG 32753 / NCTC 10114 / PG1).